We begin with the raw amino-acid sequence, 613 residues long: Vitamin B12 transporter BtuB (613 aa).

Residues 1-22 form the signal peptide; that stretch reads MQKSLLAIAMASLLTPISYLHA. A TonB box motif is present at residues 29-36; that stretch reads DTVVVTAN. A TBDR plug domain is found at 41 to 154; it reads VESSVLASIS…IGGVIHIKTI (114 aa). The region spanning 159-613 is the TBDR beta-barrel domain; it reads QTKHDANLGY…NWFATVNYRF (455 aa). The short motif at 591–613 is the TonB C-terminal box element; it reads HSSGGKYYVGEGRNWFATVNYRF.

It belongs to the TonB-dependent receptor family. BtuB (TC 1.B.14.3.1) subfamily.

Its subcellular location is the cell outer membrane. Functionally, involved in the active translocation of vitamin B12 (cyanocobalamin) across the outer membrane to the periplasmic space. It derives its energy for transport by interacting with the trans-periplasmic membrane protein TonB. The protein is Vitamin B12 transporter BtuB of Vibrio vulnificus (strain YJ016).